Consider the following 473-residue polypeptide: Uronate isomerase (473 aa).

The protein belongs to the metallo-dependent hydrolases superfamily. Uronate isomerase family.

The catalysed reaction is D-glucuronate = D-fructuronate. It carries out the reaction aldehydo-D-galacturonate = keto-D-tagaturonate. The protein operates within carbohydrate metabolism; pentose and glucuronate interconversion. In Bacillus licheniformis (strain ATCC 14580 / DSM 13 / JCM 2505 / CCUG 7422 / NBRC 12200 / NCIMB 9375 / NCTC 10341 / NRRL NRS-1264 / Gibson 46), this protein is Uronate isomerase.